We begin with the raw amino-acid sequence, 435 residues long: Xylose isomerase (435 aa).

Catalysis depends on residues His99 and Asp102. The Mg(2+) site is built by Glu230, Glu266, His269, Asp294, Asp305, Asp307, and Asp337.

The protein belongs to the xylose isomerase family. Homotetramer. It depends on Mg(2+) as a cofactor.

The protein resides in the cytoplasm. The catalysed reaction is alpha-D-xylose = alpha-D-xylulofuranose. The chain is Xylose isomerase from Listeria welshimeri serovar 6b (strain ATCC 35897 / DSM 20650 / CCUG 15529 / CIP 8149 / NCTC 11857 / SLCC 5334 / V8).